Reading from the N-terminus, the 274-residue chain is Rhamnulose-1-phosphate aldolase (274 aa).

Residue E117 is part of the active site. Zn(2+) contacts are provided by H141, H143, and H212.

This sequence belongs to the aldolase class II family. RhaD subfamily. Homotetramer. Zn(2+) is required as a cofactor.

The protein resides in the cytoplasm. The enzyme catalyses L-rhamnulose 1-phosphate = (S)-lactaldehyde + dihydroxyacetone phosphate. The protein operates within carbohydrate degradation; L-rhamnose degradation; glycerone phosphate from L-rhamnose: step 3/3. Catalyzes the reversible cleavage of L-rhamnulose-1-phosphate to dihydroxyacetone phosphate (DHAP) and L-lactaldehyde. This chain is Rhamnulose-1-phosphate aldolase, found in Escherichia coli O127:H6 (strain E2348/69 / EPEC).